Consider the following 501-residue polypeptide: Aldehyde dehydrogenase family 2 member C4 (501 aa).

245 to 250 (GSTDVG) contributes to the NAD(+) binding site. Residue glutamate 268 is the Proton acceptor of the active site. Cysteine 302 acts as the Nucleophile in catalysis.

This sequence belongs to the aldehyde dehydrogenase family. In terms of assembly, homotetramer.

Its subcellular location is the cytoplasm. It is found in the cytosol. It catalyses the reaction an aldehyde + NAD(+) + H2O = a carboxylate + NADH + 2 H(+). Functionally, involved in ferulic acid and sinapic acid biosynthesis by oxidation of conyferylaldehyde and sinapaldehyde, respectively. Can oxidize L-lactaldehyde. Possesses activity on acetaldehyde and glycolaldehyde in vitro. The protein is Aldehyde dehydrogenase family 2 member C4 (ALDH2C4) of Arabidopsis thaliana (Mouse-ear cress).